Reading from the N-terminus, the 259-residue chain is Bisphosphoglycerate mutase (259 aa).

The residue at position 2 (serine 2) is an N-acetylserine. Substrate-binding positions include 10-17 (RHGEGAWN), 23-24 (CS), arginine 62, 89-92 (ERHY), arginine 100, and 116-117 (RR). Catalysis depends on histidine 11, which acts as the Tele-phosphohistidine intermediate. Glutamate 89 acts as the Proton donor/acceptor in catalysis. Threonine 122 is modified (phosphothreonine). Position 189–190 (189–190 (GN)) interacts with substrate.

It belongs to the phosphoglycerate mutase family. BPG-dependent PGAM subfamily. In terms of assembly, homodimer.

The catalysed reaction is (2R)-3-phospho-glyceroyl phosphate = (2R)-2,3-bisphosphoglycerate + H(+). The enzyme catalyses (2R)-2-phosphoglycerate = (2R)-3-phosphoglycerate. Its activity is regulated as follows. At alkaline pH BPGM favors the synthase reaction; however, at lower pH the phosphatase reaction is dominant. Inhibited by citrate. Its function is as follows. Plays a major role in regulating hemoglobin oxygen affinity by controlling the levels of its allosteric effector 2,3-bisphosphoglycerate (2,3-BPG). Also exhibits mutase (EC 5.4.2.11) activity. The polypeptide is Bisphosphoglycerate mutase (BPGM) (Bos taurus (Bovine)).